The sequence spans 73 residues: Translation initiation factor IF-1 3 (73 aa).

Residues 1-72 enclose the S1-like domain; it reads MAKEELVEFG…TKGRINYRHK (72 aa).

The protein belongs to the IF-1 family. In terms of assembly, component of the 30S ribosomal translation pre-initiation complex which assembles on the 30S ribosome in the order IF-2 and IF-3, IF-1 and N-formylmethionyl-tRNA(fMet); mRNA recruitment can occur at any time during PIC assembly.

The protein resides in the cytoplasm. Its function is as follows. One of the essential components for the initiation of protein synthesis. Stabilizes the binding of IF-2 and IF-3 on the 30S subunit to which N-formylmethionyl-tRNA(fMet) subsequently binds. Helps modulate mRNA selection, yielding the 30S pre-initiation complex (PIC). Upon addition of the 50S ribosomal subunit IF-1, IF-2 and IF-3 are released leaving the mature 70S translation initiation complex. This is Translation initiation factor IF-1 3 from Cupriavidus pinatubonensis (strain JMP 134 / LMG 1197) (Cupriavidus necator (strain JMP 134)).